A 387-amino-acid polypeptide reads, in one-letter code: Xylose isomerase (387 aa).

Active-site residues include His-53 and Asp-56. Glu-180, Glu-216, His-219, Asp-244, Asp-254, Asp-256, and Asp-286 together coordinate Mg(2+).

This sequence belongs to the xylose isomerase family. In terms of assembly, homotetramer. Requires Mg(2+) as cofactor.

It localises to the cytoplasm. The catalysed reaction is alpha-D-xylose = alpha-D-xylulofuranose. The protein is Xylose isomerase (xylA) of Thermus thermophilus (strain ATCC 27634 / DSM 579 / HB8).